The primary structure comprises 121 residues: Apoptin (121 aa).

2 disordered regions span residues 1 to 28 (MNAL…LETP) and 57 to 121 (LRSA…RIRL). Over residues 58-70 (RSATADNSESTGF) the composition is skewed to polar residues. The span at 88-102 (RSCDPSEYRVSELKE) shows a compositional bias: basic and acidic residues.

It belongs to the gyrovirus apoptin family.

It localises to the host nucleus. Its function is as follows. May act as transcriptional regulator. Induces apoptosis in infected cells. Element of infectious replication cycle. The chain is Apoptin (VP3) from Gallus gallus (Chicken).